A 219-amino-acid polypeptide reads, in one-letter code: Histone H1.11R (219 aa).

2 stretches are compositionally biased toward low complexity: residues 1–20 and 28–40; these read MAETAPAAAPAAAPAPAAKA and AAGGAKARKPAGP. Disordered stretches follow at residues 1–42 and 89–219; these read MAET…GPSV and LVSK…AKKK. In terms of domain architecture, H15 spans 38–111; the sequence is AGPSVTELIT…GASGSFRLSK (74 aa). Basic residues-rich tracts occupy residues 121 to 135, 143 to 160, 168 to 183, and 192 to 219; these read PKKKASAAKPKKAAA, KKPKKAVAVKKSPKKAKK, KSVKSPKKAAKPKKAV, and KAVKPKAAKPKAAKPKAAKAKKAAAKKK.

Belongs to the histone H1/H5 family.

It is found in the nucleus. The protein resides in the chromosome. Functionally, histones H1 are necessary for the condensation of nucleosome chains into higher-order structures. The chain is Histone H1.11R from Gallus gallus (Chicken).